Consider the following 74-residue polypeptide: Spore germination protein GerE (74 aa).

Residues 5 to 70 enclose the HTH luxR-type domain; sequence EFQSKPLLTK…QAVVELLRMG (66 aa). Residues 29–48 constitute a DNA-binding region (H-T-H motif); sequence TKEIASELFISEKTVRNHIS.

Involved in the regulation of spore formation. Directs the transcription of several genes that encode structural components of the protein coat that encases the mature spore (CotB, CotC, CotG, CotS, CotV, CotW, CotX, CotY and CotZ). Also controls the cgeAB and cgeCDE operons. The sequence is that of Spore germination protein GerE (gerE) from Bacillus subtilis (strain 168).